Reading from the N-terminus, the 310-residue chain is GPN-loop GTPase 2 (310 aa).

At Ala-2 the chain carries N-acetylalanine. 19–24 (GSGKTT) provides a ligand contact to GTP. The Gly-Pro-Asn (GPN)-loop; involved in dimer interface motif lies at 76–78 (GPN). 178–181 (SKMD) provides a ligand contact to GTP.

This sequence belongs to the GPN-loop GTPase family. In terms of assembly, heterodimers with GPN1 or GPN3. Binds to RNA polymerase II (RNAPII).

Small GTPase required for proper localization of RNA polymerase II and III (RNAPII and RNAPIII). May act at an RNAP assembly step prior to nuclear import. In Mus musculus (Mouse), this protein is GPN-loop GTPase 2.